The primary structure comprises 396 residues: Elongation factor Tu (396 aa).

The region spanning 10-206 (KPHVNIGTIG…AVDESVPDPV (197 aa)) is the tr-type G domain. The segment at 19–26 (GHVDHGKT) is G1. 19–26 (GHVDHGKT) lines the GTP pocket. Threonine 26 is a Mg(2+) binding site. The segment at 62-66 (GITIN) is G2. A G3 region spans residues 83–86 (DAPG). Residues 83 to 87 (DAPGH) and 138 to 141 (NKSD) each bind GTP. The interval 138–141 (NKSD) is G4. Residues 176–178 (SGL) form a G5 region.

This sequence belongs to the TRAFAC class translation factor GTPase superfamily. Classic translation factor GTPase family. EF-Tu/EF-1A subfamily. As to quaternary structure, monomer.

It localises to the cytoplasm. The catalysed reaction is GTP + H2O = GDP + phosphate + H(+). In terms of biological role, GTP hydrolase that promotes the GTP-dependent binding of aminoacyl-tRNA to the A-site of ribosomes during protein biosynthesis. The polypeptide is Elongation factor Tu (Pseudarthrobacter chlorophenolicus (strain ATCC 700700 / DSM 12829 / CIP 107037 / JCM 12360 / KCTC 9906 / NCIMB 13794 / A6) (Arthrobacter chlorophenolicus)).